Consider the following 420-residue polypeptide: Glycogen synthase kinase-3 beta (420 aa).

Residues 1–22 (MSGRPRTTSFAESCKPVQQPSA) are compositionally biased toward polar residues. Residues 1–53 (MSGRPRTTSFAESCKPVQQPSAFGSMKVSRDKDGSKVTTVVATPGQGPDRPQE) are disordered. Ser9 is subject to Phosphoserine; by PKB/AKT1, RPS6KA3 and SGK3. The S-palmitoyl cysteine moiety is linked to residue Cys14. The Protein kinase domain maps to 56 to 340 (YTDTKVIGNG…PLEACAHSFF (285 aa)). Residues 62–70 (IGNGSFGVV) and Lys85 contribute to the ATP site. Asp181 serves as the catalytic Proton acceptor. Tyr216 is subject to Phosphotyrosine. The disordered stretch occupies residues 385–420 (QAAASPPANATAASDTNAGDRGQTNNAASASASNST). Low complexity-rich tracts occupy residues 386–401 (AAAS…SDTN) and 409–420 (NNAASASASNST). A Phosphoserine modification is found at Ser389.

It belongs to the protein kinase superfamily. CMGC Ser/Thr protein kinase family. GSK-3 subfamily. In terms of assembly, monomer. Interacts with DAB2IP (via C2 domain); the interaction stimulates GSK3B kinase activation. Interacts (via C2 domain) with PPP2CA. Interacts with ARRB2, AXIN1, CABYR, DISC1, MMP2, MUC1, NIN, PRUNE1 and ZBED3. Interacts with AXIN1; the interaction mediates hyperphosphorylation of CTNNB1 leading to its ubiquitination and destruction. Interacts with and phosphorylates SNAI1. Interacts with DNM1L (via a C-terminal domain). Found in a complex composed of MACF1, APC, AXIN1, CTNNB1 and GSK3B. Interacts with SGK3. Interacts with the CLOCK-BMAL1 heterodimer. Interacts with the BMAL1. Interacts with CTNND2. The complex composed, at least, of APC, CTNNB1 and GSK3B interacts with JPT1; the interaction requires the inactive form of GSK3B (phosphorylated at 'Ser-9'). Forms a complex composed of PRKAR2A or PRKAR2B, GSK3B and GSKIP through GSKIP interaction; facilitates PKA-induced phosphorylation and regulates GSK3B activity. Interacts with GSKIP. Interacts with GID8. Interacts with PIWIL2. Interacts with LMBR1L. Interacts with DDX3X. Interacts with BIRC2. Interacts with TNFRSF10B; TNFRSF10B stimulation inhibits GSK3B kinase activity. Found in a complex with SLC39A6, SLC39A10 and with GSK3B that controls NCAM1 phosphorylation. Interacts with PKP3 (via ARM repeats); the interaction may be involved in PKP3 protein degradation. In terms of processing, phosphorylated by AKT1 and ILK1. Upon insulin-mediated signaling, the activated PKB/AKT1 and RPS6KA3 protein kinases phosphorylate and deactivate GSK3B, resulting in the dephosphorylation and activation of GYS1. Activated by phosphorylation at Tyr-216. Inactivated by phosphorylation at Ser-9. Phosphorylated in a circadian manner in the hippocampus. Post-translationally, mono-ADP-ribosylation by PARP10 negatively regulates kinase activity. Palmitoylated. Palmitoylation by ZDHHC4 prevents AKT1-mediated phosphorylation.

Its subcellular location is the cytoplasm. The protein resides in the nucleus. It localises to the membrane. The protein localises to the cell membrane. The enzyme catalyses L-seryl-[tau protein] + ATP = O-phospho-L-seryl-[tau protein] + ADP + H(+). The catalysed reaction is L-threonyl-[tau protein] + ATP = O-phospho-L-threonyl-[tau protein] + ADP + H(+). It catalyses the reaction L-seryl-[protein] + ATP = O-phospho-L-seryl-[protein] + ADP + H(+). It carries out the reaction L-threonyl-[protein] + ATP = O-phospho-L-threonyl-[protein] + ADP + H(+). Its activity is regulated as follows. Activated by phosphorylation at Tyr-216. In response to insulin, inhibited by phosphorylation at Ser-9 by PKB/AKT1; phosphorylation at this site causes a conformational change, preventing access of substrates to the active site. Inhibited by IL22 treatment which also triggers phosphorylation at Ser-9, promoting inactivation. Inhibited by lithium. Its function is as follows. Constitutively active protein kinase that acts as a negative regulator in the hormonal control of glucose homeostasis, Wnt signaling and regulation of transcription factors and microtubules, by phosphorylating and inactivating glycogen synthase (GYS1 or GYS2), EIF2B, CTNNB1/beta-catenin, APC, AXIN1, DPYSL2/CRMP2, JUN, NFATC1/NFATC, MAPT/TAU and MACF1. Requires primed phosphorylation of the majority of its substrates. In skeletal muscle, contributes to insulin regulation of glycogen synthesis by phosphorylating and inhibiting GYS1 activity and hence glycogen synthesis. May also mediate the development of insulin resistance by regulating activation of transcription factors. Regulates protein synthesis by controlling the activity of initiation factor 2B (EIF2BE/EIF2B5) in the same manner as glycogen synthase. In Wnt signaling, GSK3B forms a multimeric complex with APC, AXIN1 and CTNNB1/beta-catenin and phosphorylates the N-terminus of CTNNB1 leading to its degradation mediated by ubiquitin/proteasomes. Phosphorylates JUN at sites proximal to its DNA-binding domain, thereby reducing its affinity for DNA. Phosphorylates NFATC1/NFATC on conserved serine residues promoting NFATC1/NFATC nuclear export, shutting off NFATC1/NFATC gene regulation, and thereby opposing the action of calcineurin. Phosphorylates MAPT/TAU on 'Thr-548', decreasing significantly MAPT/TAU ability to bind and stabilize microtubules. MAPT/TAU is the principal component of neurofibrillary tangles in Alzheimer disease. Plays an important role in ERBB2-dependent stabilization of microtubules at the cell cortex. Phosphorylates MACF1, inhibiting its binding to microtubules which is critical for its role in bulge stem cell migration and skin wound repair. Probably regulates NF-kappa-B (NFKB1) at the transcriptional level and is required for the NF-kappa-B-mediated anti-apoptotic response to TNF-alpha (TNF/TNFA). Negatively regulates replication in pancreatic beta-cells, resulting in apoptosis, loss of beta-cells and diabetes. Through phosphorylation of the anti-apoptotic protein MCL1, may control cell apoptosis in response to growth factors deprivation. Phosphorylates MUC1 in breast cancer cells, decreasing the interaction of MUC1 with CTNNB1/beta-catenin. Is necessary for the establishment of neuronal polarity and axon outgrowth. Phosphorylates MARK2, leading to inhibition of its activity. Phosphorylates SIK1 at 'Thr-182', leading to sustainment of its activity. Phosphorylates ZC3HAV1 which enhances its antiviral activity. Phosphorylates SNAI1, leading to its ubiquitination and proteasomal degradation. Phosphorylates SFPQ at 'Thr-687' upon T-cell activation. Phosphorylates NR1D1 st 'Ser-55' and 'Ser-59' and stabilizes it by protecting it from proteasomal degradation. Regulates the circadian clock via phosphorylation of the major clock components including BMAL1, CLOCK and PER2. Phosphorylates CLOCK AT 'Ser-427' and targets it for proteasomal degradation. Phosphorylates BMAL1 at 'Ser-17' and 'Ser-21' and primes it for ubiquitination and proteasomal degradation. Phosphorylates FBXL2 at 'Thr-404' and primes it for ubiquitination by the SCF(FBXO3) complex and proteasomal degradation. Phosphorylates OGT at 'Ser-3' or 'Ser-4' which positively regulates its activity. Phosphorylates MYCN in neuroblastoma cells which may promote its degradation. Regulates the circadian rhythmicity of hippocampal long-term potentiation and BMAL1 and PER2 expression. Acts as a regulator of autophagy by mediating phosphorylation of KAT5/TIP60 under starvation conditions, activating KAT5/TIP60 acetyltransferase activity and promoting acetylation of key autophagy regulators, such as ULK1 and RUBCNL/Pacer. Negatively regulates extrinsic apoptotic signaling pathway via death domain receptors. Promotes the formation of an anti-apoptotic complex, made of DDX3X, BRIC2 and GSK3B, at death receptors, including TNFRSF10B. The anti-apoptotic function is most effective with weak apoptotic signals and can be overcome by stronger stimulation. Phosphorylates E2F1, promoting the interaction between E2F1 and USP11, stabilizing E2F1 and promoting its activity. Phosphorylates mTORC2 complex component RICTOR at 'Ser-1235' in response to endoplasmic stress, inhibiting mTORC2. Phosphorylates FXR1, promoting FXR1 ubiquitination by the SCF(FBXO4) complex and FXR1 degradation by the proteasome. Phosphorylates interleukin-22 receptor subunit IL22RA1, preventing its proteasomal degradation. The polypeptide is Glycogen synthase kinase-3 beta (Rattus norvegicus (Rat)).